The following is a 306-amino-acid chain: Putative type I specificity subunit S.MpnORF285P (306 aa).

This sequence belongs to the type-I restriction system S methylase family. The methyltransferase is composed of M and S polypeptides.

Functionally, the specificity (S) subunit of a type I methyltransferase (MTase); this subunit dictates DNA sequence specificity. The single R subunit has multiple frameshifts and is probably not expressed. The protein is Putative type I specificity subunit S.MpnORF285P of Mycoplasma pneumoniae (strain ATCC 29342 / M129 / Subtype 1) (Mycoplasmoides pneumoniae).